The primary structure comprises 184 residues: Shikimate kinase (184 aa).

Position 12 to 17 (12 to 17) interacts with ATP; sequence GSGKST. Ser-16 is a binding site for Mg(2+). The substrate site is built by Asp-34, Arg-58, and Gly-80. An ATP-binding site is contributed by Arg-117. Arg-136 lines the substrate pocket. Arg-153 contacts ATP. Residues 164 to 184 are disordered; the sequence is SRLDDPTPNTSPSSTASGAAT. Residues 169–184 show a composition bias toward low complexity; sequence PTPNTSPSSTASGAAT.

It belongs to the shikimate kinase family. In terms of assembly, monomer. It depends on Mg(2+) as a cofactor.

It localises to the cytoplasm. It catalyses the reaction shikimate + ATP = 3-phosphoshikimate + ADP + H(+). It functions in the pathway metabolic intermediate biosynthesis; chorismate biosynthesis; chorismate from D-erythrose 4-phosphate and phosphoenolpyruvate: step 5/7. Its function is as follows. Catalyzes the specific phosphorylation of the 3-hydroxyl group of shikimic acid using ATP as a cosubstrate. The protein is Shikimate kinase of Mycobacterium ulcerans (strain Agy99).